The following is a 395-amino-acid chain: Elongation factor Tu (395 aa).

In terms of domain architecture, tr-type G spans 10–204; it reads KPHVNIGTIG…AVDEYIPTPQ (195 aa). The tract at residues 19–26 is G1; it reads GHVDHGKT. Position 19–26 (19–26) interacts with GTP; sequence GHVDHGKT. Thr26 is a Mg(2+) binding site. Residues 60 to 64 are G2; that stretch reads GITIS. A G3 region spans residues 81–84; the sequence is DCPG. Residues 81–85 and 136–139 contribute to the GTP site; these read DCPGH and NKCD. A G4 region spans residues 136–139; it reads NKCD. Residues 174–176 are G5; that stretch reads SAL.

Belongs to the TRAFAC class translation factor GTPase superfamily. Classic translation factor GTPase family. EF-Tu/EF-1A subfamily. In terms of assembly, monomer.

Its subcellular location is the cytoplasm. The catalysed reaction is GTP + H2O = GDP + phosphate + H(+). Its function is as follows. GTP hydrolase that promotes the GTP-dependent binding of aminoacyl-tRNA to the A-site of ribosomes during protein biosynthesis. The chain is Elongation factor Tu from Anoxybacillus flavithermus (strain DSM 21510 / WK1).